Reading from the N-terminus, the 105-residue chain is Met repressor (105 aa).

Belongs to the MetJ family. Homodimer.

The protein resides in the cytoplasm. In terms of biological role, this regulatory protein, when combined with SAM (S-adenosylmethionine) represses the expression of the methionine regulon and of enzymes involved in SAM synthesis. This Histophilus somni (strain 129Pt) (Haemophilus somnus) protein is Met repressor.